We begin with the raw amino-acid sequence, 381 residues long: Nitric oxide reductase FlRd-NAD(+) reductase (381 aa).

Belongs to the FAD-dependent oxidoreductase family. It depends on FAD as a cofactor.

The protein localises to the cytoplasm. It catalyses the reaction 2 reduced [nitric oxide reductase rubredoxin domain] + NAD(+) + H(+) = 2 oxidized [nitric oxide reductase rubredoxin domain] + NADH. It functions in the pathway nitrogen metabolism; nitric oxide reduction. One of at least two accessory proteins for anaerobic nitric oxide (NO) reductase. Reduces the rubredoxin moiety of NO reductase. This chain is Nitric oxide reductase FlRd-NAD(+) reductase, found in Aliivibrio fischeri (strain ATCC 700601 / ES114) (Vibrio fischeri).